We begin with the raw amino-acid sequence, 595 residues long: MQIIEIREPEQADFKPEQQIAVGIDFGTTNSLIAIAANRKVKVIKSIDDKELIPTTIDFTSNNFTIGNNKGLRSIKRLFGKTLKEILNTPALFSLVKDYLDVNSSELKLNFANKQLRVPEIAAEIFIYLKNQAEEQLKTNLTKAVITVPAHFNDAARGEVMLAAKIAGFEVLRLIAEPTAAAYAYGLNKNQKGCYLVYDLGGGTFDVSILNIQEGIFQVIATNGDNMLGGNDIDVVITQYLCNKFDLPNSIDTLQLAKKAKETLTYKDSFNNDNVSINKQTLEQLILPLVERTINIAQECLEQAGNPNIDGVILVGGATRTPLIKDELYKAFKIDILSDIDPDKAVVWGAALQAENLIAPHTNSLLIDVAPLSLGMELYGGIVEKIIMHNTPIPISVVKEFTTYVDNQTGIQFHILQGEREMAADCRSLARFELKGLPPMKAGYIRAEVTFSIDADGILSVSAYEKISNTSHAIEVKPNHGIDKTEIDIMLENAYKNAKIDYTTRLLQEAVIEAEAFIFSIERAIAEFTTLLSESEISIINSLLDNIKEAVHARDWILINNSIKEFKSKIKKSMDTKFNVIINDLLKGKNINQIK.

This sequence belongs to the heat shock protein 70 family.

In terms of biological role, chaperone involved in the maturation of iron-sulfur cluster-containing proteins. Has a low intrinsic ATPase activity which is markedly stimulated by HscB. The sequence is that of Chaperone protein HscA homolog from Rickettsia rickettsii (strain Iowa).